An 82-amino-acid chain; its full sequence is Turripeptide Lol6.1 (82 aa).

The N-terminal stretch at 1–23 (MRFHWIPTLTVLLVLSMSFGTEA) is a signal peptide. Residues 24-48 (IPXXXXXXXXXXXXXXXXXXXXXXX) constitute a propeptide that is removed on maturation. Cystine bridges form between C54/C66, C58/C71, and C65/C77.

In terms of tissue distribution, expressed by the venom duct.

Its subcellular location is the secreted. In terms of biological role, acts as a neurotoxin by inhibiting an ion channel. The chain is Turripeptide Lol6.1 from Iotyrris olangoensis (Sea snail).